The following is a 522-amino-acid chain: Subtilisin-like protease 10 (522 aa).

A signal peptide spans 1–19 (MFFFKGVVAVLSFFSAVNA). The propeptide occupies 20–117 (APFMKPNNGT…VERDQIGTSQ (98 aa)). The 78-residue stretch at 36-113 (SYIVLLKRDI…HVAHVERDQI (78 aa)) folds into the Inhibitor I9 domain. The 279-residue stretch at 127–405 (NWGLGRLSNN…KLLVNGANGT (279 aa)) folds into the Peptidase S8 domain. Catalysis depends on charge relay system residues aspartate 159 and histidine 190. An N-linked (GlcNAc...) asparagine glycan is attached at asparagine 251. Serine 348 functions as the Charge relay system in the catalytic mechanism. Positions 384–397 (ASVKNPGPNTTNKL) are enriched in polar residues. A disordered region spans residues 384–515 (ASVKNPGPNT…GWNRPMWWNR (132 aa)). Asparagine 392 and asparagine 403 each carry an N-linked (GlcNAc...) asparagine glycan. The segment covering 432 to 459 (SQNPPPGQNPPPGQNPPPEQPAPSPPAN) has biased composition (pro residues).

This sequence belongs to the peptidase S8 family.

The protein localises to the secreted. Functionally, secreted subtilisin-like serine protease with keratinolytic activity that contributes to pathogenicity. In Arthroderma benhamiae (strain ATCC MYA-4681 / CBS 112371) (Trichophyton mentagrophytes), this protein is Subtilisin-like protease 10 (SUB10).